Here is a 123-residue protein sequence, read N- to C-terminus: Large ribosomal subunit protein bL12 (123 aa).

It belongs to the bacterial ribosomal protein bL12 family. As to quaternary structure, homodimer. Part of the ribosomal stalk of the 50S ribosomal subunit. Forms a multimeric L10(L12)X complex, where L10 forms an elongated spine to which 2 to 4 L12 dimers bind in a sequential fashion. Binds GTP-bound translation factors.

In terms of biological role, forms part of the ribosomal stalk which helps the ribosome interact with GTP-bound translation factors. Is thus essential for accurate translation. In Rhodopseudomonas palustris (strain BisB18), this protein is Large ribosomal subunit protein bL12.